Here is a 236-residue protein sequence, read N- to C-terminus: LHFPL tetraspan subfamily member 3 protein (236 aa).

4 consecutive transmembrane segments (helical) span residues 36–56 (IGVLWAIFTICFAIVNVVCFI), 110–130 (FFIGLSMMLIIACIICFTLFF), 140–160 (ICAWMQLTSAACLVLGCMIFP), and 191–211 (ILAIIGILDALILSFLAFVLG).

The protein belongs to the LHFP family.

The protein resides in the membrane. This Homo sapiens (Human) protein is LHFPL tetraspan subfamily member 3 protein.